Reading from the N-terminus, the 424-residue chain is Acetyl-CoA acetyltransferase, mitochondrial (424 aa).

A mitochondrion-targeting transit peptide spans 1–30 (MAALVALHGVVRRPLLRGLLQEVRCLERSY). Lys-63 carries the N6-acetyllysine; alternate modification. Lys-63 bears the N6-succinyllysine; alternate mark. An N6-succinyllysine modification is found at Lys-75. Catalysis depends on Cys-123, which acts as the Acyl-thioester intermediate. An N6-acetyllysine; alternate mark is found at Lys-171, Lys-178, Lys-187, and Lys-199. 4 positions are modified to N6-succinyllysine; alternate: Lys-171, Lys-178, Lys-187, and Lys-199. Ser-204 carries the post-translational modification Phosphoserine. Residue Tyr-216 participates in CoA binding. Residue Tyr-216 coordinates K(+). N6-acetyllysine; alternate is present on residues Lys-220 and Lys-227. Residues Lys-220 and Lys-227 each carry the N6-succinyllysine; alternate modification. N6-succinyllysine is present on Lys-240. Lys-242 is subject to N6-acetyllysine; alternate. Lys-242 is subject to N6-succinyllysine; alternate. N6-acetyllysine is present on residues Lys-248 and Lys-254. CoA contacts are provided by residues 255-257 (RVD) and Lys-260. Lys-260 is modified (N6-acetyllysine; alternate). N6-succinyllysine; alternate is present on Lys-260. N6-succinyllysine occurs at positions 263 and 265. Position 270 is an N6-acetyllysine (Lys-270). Ala-277, Ala-278, and Ala-280 together coordinate K(+). A CoA-binding site is contributed by Ser-281. Lys-335 carries the N6-acetyllysine modification. Residue Val-378 coordinates K(+). Cys-410 serves as the catalytic Proton donor/acceptor.

It belongs to the thiolase-like superfamily. Thiolase family. As to quaternary structure, homotetramer. Post-translationally, succinylation at Lys-265, adjacent to a coenzyme A binding site. Desuccinylated by SIRT5.

The protein resides in the mitochondrion. It catalyses the reaction 2 acetyl-CoA = acetoacetyl-CoA + CoA. The catalysed reaction is propanoyl-CoA + acetyl-CoA = 2-methyl-3-oxobutanoyl-CoA + CoA. It participates in lipid metabolism; fatty acid beta-oxidation. Its activity is regulated as follows. Activated by potassium ions, but not sodium ions. This is one of the enzymes that catalyzes the last step of the mitochondrial beta-oxidation pathway, an aerobic process breaking down fatty acids into acetyl-CoA. Using free coenzyme A/CoA, catalyzes the thiolytic cleavage of medium- to long-chain 3-oxoacyl-CoAs into acetyl-CoA and a fatty acyl-CoA shortened by two carbon atoms. The activity of the enzyme is reversible and it can also catalyze the condensation of two acetyl-CoA molecules into acetoacetyl-CoA. Thereby, it plays a major role in ketone body metabolism. In Mus musculus (Mouse), this protein is Acetyl-CoA acetyltransferase, mitochondrial (Acat1).